A 162-amino-acid polypeptide reads, in one-letter code: Phosphopantetheine adenylyltransferase (162 aa).

Residue Thr10 coordinates substrate. ATP is bound by residues Thr10–Phe11 and His18. 3 residues coordinate substrate: Lys42, Leu74, and Arg88. Residues Gly89–Arg91, Glu99, and Asn124–Thr130 contribute to the ATP site.

Belongs to the bacterial CoaD family. In terms of assembly, homohexamer. It depends on Mg(2+) as a cofactor.

The protein localises to the cytoplasm. The enzyme catalyses (R)-4'-phosphopantetheine + ATP + H(+) = 3'-dephospho-CoA + diphosphate. The protein operates within cofactor biosynthesis; coenzyme A biosynthesis; CoA from (R)-pantothenate: step 4/5. Reversibly transfers an adenylyl group from ATP to 4'-phosphopantetheine, yielding dephospho-CoA (dPCoA) and pyrophosphate. The protein is Phosphopantetheine adenylyltransferase of Alteromonas mediterranea (strain DSM 17117 / CIP 110805 / LMG 28347 / Deep ecotype).